The chain runs to 224 residues: Peroxiredoxin-6 (224 aa).

A Thioredoxin domain is found at Leu-5–Leu-169. The required and sufficient for targeting to lysosomes and lamellar bodies stretch occupies residues Asp-31–Pro-40. A Phosphothreonine modification is found at Thr-44. Catalysis depends on Cys-47, which acts as the Cysteine sulfenic acid (-SOH) intermediate; for peroxidase activity. Lys-63 carries the N6-acetyllysine modification. The residue at position 89 (Tyr-89) is a Phosphotyrosine. The For phospholipase activity role is filled by Asp-140. At Thr-177 the chain carries Phosphothreonine; by MAPK. Residue Lys-209 is modified to N6-acetyllysine; alternate. Lys-209 bears the N6-succinyllysine; alternate mark.

Belongs to the peroxiredoxin family. Prx6 subfamily. Homodimer. Interacts with GSTP1; mediates PRDX6 glutathionylation and regeneration. Interacts with APEX1. Interacts with STH. May interact with FAM168B. May interact with HTR2A. Irreversibly inactivated by overoxidation of Cys-47 to sulfinic acid (Cys-SO(2)H) and sulfonic acid (Cys-SO(3)H) forms upon oxidative stress. Post-translationally, phosphorylation at Thr-177 by MAP kinases increases the phospholipase activity of the enzyme. The phosphorylated form exhibits a greater lysophosphatidylcholine acyltransferase activity compared to the non-phosphorylated form.

The protein localises to the cytoplasm. Its subcellular location is the lysosome. The enzyme catalyses a hydroperoxide + 2 glutathione = an alcohol + glutathione disulfide + H2O. It carries out the reaction a 1,2-diacyl-sn-glycero-3-phosphocholine + H2O = a 1-acyl-sn-glycero-3-phosphocholine + a fatty acid + H(+). The catalysed reaction is a 1-acyl-sn-glycero-3-phosphocholine + an acyl-CoA = a 1,2-diacyl-sn-glycero-3-phosphocholine + CoA. It catalyses the reaction 1-hexadecanoyl-sn-glycero-3-phosphocholine + hexadecanoyl-CoA = 1,2-dihexadecanoyl-sn-glycero-3-phosphocholine + CoA. The enzyme catalyses 1,2-dihexadecanoyl-sn-glycero-3-phosphocholine + H2O = 1-hexadecanoyl-sn-glycero-3-phosphocholine + hexadecanoate + H(+). Thiol-specific peroxidase that catalyzes the reduction of hydrogen peroxide and organic hydroperoxides to water and alcohols, respectively. Can reduce H(2)O(2) and short chain organic, fatty acid, and phospholipid hydroperoxides. Also has phospholipase activity, and can therefore either reduce the oxidized sn-2 fatty acyl group of phospholipids (peroxidase activity) or hydrolyze the sn-2 ester bond of phospholipids (phospholipase activity). These activities are dependent on binding to phospholipids at acidic pH and to oxidized phospholipds at cytosolic pH. Plays a role in cell protection against oxidative stress by detoxifying peroxides and in phospholipid homeostasis. Exhibits acyl-CoA-dependent lysophospholipid acyltransferase which mediates the conversion of lysophosphatidylcholine (1-acyl-sn-glycero-3-phosphocholine or LPC) into phosphatidylcholine (1,2-diacyl-sn-glycero-3-phosphocholine or PC). Shows a clear preference for LPC as the lysophospholipid and for palmitoyl CoA as the fatty acyl substrate. The polypeptide is Peroxiredoxin-6 (PRDX6) (Macaca fascicularis (Crab-eating macaque)).